A 616-amino-acid polypeptide reads, in one-letter code: MIKKISLLTALSVTAFSGWAQDSGSDSLVVTANRFQQPVNTVLAPTSVVTREDIERWQANTVIDVMRRLPGVDTAQSGGMGQLSSLFIRGTNSSHVLILVDGIRLNQAGVTGSSDLSQFPLALVQRIEYIRGPRSAVYGSDAIGGVVNIITTRAKDGTTLNAGIGSHSYQNYGGSTQQTLGDNTRVTLAGDYTYTRGFDVVAEGNNGGLAQPDRDGFMNKTLYGALEHAFSDQWTGFVRGYGYSNRTAYDGYYNSFTPDVLVDTRQLYSQTWDAGLRFNNDLFHSQLLSSYSHSKDYNYDPHLGRYDSTATLDEIKQYNVQWTNAVDVGHGNIGAGVDWQKQSTEPGTSYVTNGYDLRNTGVYLTALQKFGDVTLEGAVRSDDNSQFGRHGTWQSSAAWEFIEGYRFIASYGTAYKAPNLGQLYGFYGNDHLDPEESKQWEGAFEGLTAGVNWRVSAYRNDVDNLIDFNNNLQEYYNVGKARIKGVEATASFDTGPLTHTLGYDYVDARNAATNALLVRRAKQQVKYQLDTQLYDFDWSLTYHYLGTRYDTDFSTYPTQNVKLGGVSLWDVAVSYPVTSHLTVRGKIANLFDKDYETAYGYATAGREYTLSGSYTF.

The N-terminal stretch at 1 to 20 (MIKKISLLTALSVTAFSGWA) is a signal peptide. Positions 26-33 (DSLVVTAN) match the TonB box motif. Residues 38 to 152 (PVNTVLAPTS…IGGVVNIITT (115 aa)) enclose the TBDR plug domain. Cyanocob(III)alamin-binding positions include Leu-83, Ser-85, Asn-92, and 110 to 111 (VT). A TBDR beta-barrel domain is found at 155–616 (KDGTTLNAGI…EYTLSGSYTF (462 aa)). Beta stranded transmembrane passes span 158 to 165 (TTLNAGIG), 169 to 178 (YQNYGGSTQQ), and 184 to 195 (TRVTLAGDYTYT). Positions 199, 211, 213, and 215 each coordinate Ca(2+). The next 2 beta stranded transmembrane spans lie at 217-227 (FMNKTLYGALE) and 232-248 (DQWT…NRTA). The Ca(2+) site is built by Tyr-249, Asp-250, and Asp-263. The next 17 membrane-spanning stretches (beta stranded) occupy residues 265-279 (RQLY…LRFN), 281-298 (DLFH…KDYN), 311-327 (TLDE…NAVD), 330-339 (HGNIGAGVDW), 355-371 (YDLR…QKFG), 373-383 (VTLEGAVRSDD), 387-402 (FGRH…WEFI), 405-419 (YRFI…KAPN), 436-445 (ESKQWEGAFE), 451-460 (VNWRVSAYRN), 475-492 (YYNV…TASF), 496-511 (PLTH…ARNA), 519-531 (RRAK…QLDT), 537-552 (DWSL…YDTD), 560-574 (NVKL…VAVS), 587-598 (IANLFDKDYETA), and 604-616 (AGRE…SYTF). A cyanocob(III)alamin-binding site is contributed by Thr-311. Arg-519 provides a ligand contact to cyanocob(III)alamin. A TonB C-terminal box motif is present at residues 599-616 (YGYATAGREYTLSGSYTF).

The protein belongs to the TonB-dependent receptor family. BtuB (TC 1.B.14.3.1) subfamily.

The protein localises to the cell outer membrane. Its function is as follows. Involved in the active translocation of vitamin B12 (cyanocobalamin) across the outer membrane to the periplasmic space. It derives its energy for transport by interacting with the trans-periplasmic membrane protein TonB. The chain is Vitamin B12 transporter BtuB from Cronobacter sakazakii (strain ATCC BAA-894) (Enterobacter sakazakii).